The sequence spans 313 residues: Methionyl-tRNA formyltransferase (313 aa).

Position 109–112 (109–112) interacts with (6S)-5,6,7,8-tetrahydrofolate; it reads SLLP.

This sequence belongs to the Fmt family.

The enzyme catalyses L-methionyl-tRNA(fMet) + (6R)-10-formyltetrahydrofolate = N-formyl-L-methionyl-tRNA(fMet) + (6S)-5,6,7,8-tetrahydrofolate + H(+). Its function is as follows. Attaches a formyl group to the free amino group of methionyl-tRNA(fMet). The formyl group appears to play a dual role in the initiator identity of N-formylmethionyl-tRNA by promoting its recognition by IF2 and preventing the misappropriation of this tRNA by the elongation apparatus. In Thermotoga sp. (strain RQ2), this protein is Methionyl-tRNA formyltransferase.